The sequence spans 345 residues: Phenylalanine--tRNA ligase alpha subunit (345 aa).

Residue Glu266 coordinates Mg(2+).

Belongs to the class-II aminoacyl-tRNA synthetase family. Phe-tRNA synthetase alpha subunit type 1 subfamily. Tetramer of two alpha and two beta subunits. The cofactor is Mg(2+).

It is found in the cytoplasm. It catalyses the reaction tRNA(Phe) + L-phenylalanine + ATP = L-phenylalanyl-tRNA(Phe) + AMP + diphosphate + H(+). In Burkholderia lata (strain ATCC 17760 / DSM 23089 / LMG 22485 / NCIMB 9086 / R18194 / 383), this protein is Phenylalanine--tRNA ligase alpha subunit.